We begin with the raw amino-acid sequence, 326 residues long: MRPPAFWAAGPDHPAARGLGPLGAVYGALAARRMDRPGARAGCPVLCLGNFTLGGAGKTPAALAVAALVAELGAAPAFLSRGYGGRLAGPVRVDPAHHAAAEVGDEPLLLARRAPAVVARDRPAGAALCRSLGADVIVMDDGLQNPSLAKDLSLAVVDGPAGLGNGLPFPAGPLRAPLARQWPHVGGLIVIGNGAGGDAVARAAERRGLPVHGARLVREADDLAGRRCLAFAGIGRPEKFYATLAEAGAVIVGTRPYPDHHPYRARELAALAEAARRLDAELVTTEKDAVRLPRAFAAGVRVLRVRLAFDDAEALRRQIRGALGAP.

Position 52-59 (Thr-52–Thr-59) interacts with ATP.

Belongs to the LpxK family.

It carries out the reaction a lipid A disaccharide + ATP = a lipid IVA + ADP + H(+). The protein operates within glycolipid biosynthesis; lipid IV(A) biosynthesis; lipid IV(A) from (3R)-3-hydroxytetradecanoyl-[acyl-carrier-protein] and UDP-N-acetyl-alpha-D-glucosamine: step 6/6. Functionally, transfers the gamma-phosphate of ATP to the 4'-position of a tetraacyldisaccharide 1-phosphate intermediate (termed DS-1-P) to form tetraacyldisaccharide 1,4'-bis-phosphate (lipid IVA). This is Tetraacyldisaccharide 4'-kinase from Methylobacterium radiotolerans (strain ATCC 27329 / DSM 1819 / JCM 2831 / NBRC 15690 / NCIMB 10815 / 0-1).